Reading from the N-terminus, the 320-residue chain is Pyrroline-5-carboxylate reductase (320 aa).

The protein belongs to the pyrroline-5-carboxylate reductase family.

It catalyses the reaction L-proline + NADP(+) = (S)-1-pyrroline-5-carboxylate + NADPH + 2 H(+). The enzyme catalyses L-proline + NAD(+) = (S)-1-pyrroline-5-carboxylate + NADH + 2 H(+). It participates in amino-acid biosynthesis; L-proline biosynthesis; L-proline from L-glutamate 5-semialdehyde: step 1/1. The sequence is that of Pyrroline-5-carboxylate reductase (P5CR) from Lophium arboricola (Zalerion arboricola).